We begin with the raw amino-acid sequence, 324 residues long: Alkanal monooxygenase beta chain (324 aa).

It belongs to the bacterial luciferase oxidoreductase family. Heterodimer of an alpha and a beta chain.

The enzyme catalyses a long-chain fatty aldehyde + FMNH2 + O2 = a long-chain fatty acid + hnu + FMN + H2O + 2 H(+). In terms of biological role, light-emitting reaction in luminous bacteria. The specific role of the beta subunit is unknown, but it is absolutely required for bioluminescence activity. In Photorhabdus luminescens (Xenorhabdus luminescens), this protein is Alkanal monooxygenase beta chain (luxB).